Here is a 546-residue protein sequence, read N- to C-terminus: CTP synthase (546 aa).

Positions 1-266 are amidoligase domain; it reads MTTRYIFVTG…DELVVKRFSL (266 aa). S14 is a binding site for CTP. S14 contributes to the UTP binding site. ATP is bound by residues 15–20 and D72; that span reads SLGKGI. Residues D72 and E140 each contribute to the Mg(2+) site. CTP contacts are provided by residues 147-149, 187-192, and K223; these read DIE and KTKPTQ. UTP is bound by residues 187–192 and K223; that span reads KTKPTQ. 239–241 provides a ligand contact to ATP; it reads KDV. A Glutamine amidotransferase type-1 domain is found at 291-542; sequence VIGMVGKYIE…VAAASAHQKR (252 aa). Residue G352 participates in L-glutamine binding. Residue C379 is the Nucleophile; for glutamine hydrolysis of the active site. Residues 380-383, E403, and R470 contribute to the L-glutamine site; that span reads LGMQ. Residues H515 and E517 contribute to the active site.

This sequence belongs to the CTP synthase family. In terms of assembly, homotetramer.

It carries out the reaction UTP + L-glutamine + ATP + H2O = CTP + L-glutamate + ADP + phosphate + 2 H(+). It catalyses the reaction L-glutamine + H2O = L-glutamate + NH4(+). The enzyme catalyses UTP + NH4(+) + ATP = CTP + ADP + phosphate + 2 H(+). It functions in the pathway pyrimidine metabolism; CTP biosynthesis via de novo pathway; CTP from UDP: step 2/2. Its activity is regulated as follows. Allosterically activated by GTP, when glutamine is the substrate; GTP has no effect on the reaction when ammonia is the substrate. The allosteric effector GTP functions by stabilizing the protein conformation that binds the tetrahedral intermediate(s) formed during glutamine hydrolysis. Inhibited by the product CTP, via allosteric rather than competitive inhibition. Functionally, catalyzes the ATP-dependent amination of UTP to CTP with either L-glutamine or ammonia as the source of nitrogen. Regulates intracellular CTP levels through interactions with the four ribonucleotide triphosphates. In Shewanella oneidensis (strain ATCC 700550 / JCM 31522 / CIP 106686 / LMG 19005 / NCIMB 14063 / MR-1), this protein is CTP synthase.